A 385-amino-acid polypeptide reads, in one-letter code: Beta-lactamase (385 aa).

Residues M1–V20 form the signal peptide. S84 functions as the Acyl-ester intermediate in the catalytic mechanism. Y170 acts as the Proton acceptor in catalysis. K335–G337 provides a ligand contact to substrate.

This sequence belongs to the class-C beta-lactamase family.

It is found in the periplasm. The catalysed reaction is a beta-lactam + H2O = a substituted beta-amino acid. Its function is as follows. This protein is a serine beta-lactamase with a substrate specificity for cephalosporins. The polypeptide is Beta-lactamase (Lysobacter lactamgenus).